A 400-amino-acid polypeptide reads, in one-letter code: Capsid protein (400 aa).

Over residues 1–10 (MDPNLDQDTL) the composition is skewed to polar residues. The segment at 1 to 54 (MDPNLDQDTLPTHEEIDNDVDSAEEEPPEPPLLPDDIDDDDSHGSRTRRQVKPP) is disordered. The span at 16-28 (IDNDVDSAEEEPP) shows a compositional bias: acidic residues.

It belongs to the potexvirus capsid protein family.

It is found in the virion. Its function is as follows. Required for genome encapsidation. In Botryotinia fuckeliana (Noble rot fungus), this protein is Capsid protein (ORF3).